A 193-amino-acid polypeptide reads, in one-letter code: MVDYILLIISTALINNFVLVKFLGLCPFMGVSKKVETAIGMGMATTFVLTVASLSAYLVETYVLIPLEAQFLRTLVFILVIAVIVQLTEMIVHKTSPTLYRLLGIYLPLITTNCAVLGVALLNVNLSNNLVESVLYGFGAALGFSLVLVLFAALRERLAAADVPRPFQGASIALITAGLMSLAFMGFTGLVKI.

The next 6 membrane-spanning stretches (helical) occupy residues 5–25 (ILLI…FLGL), 39–59 (IGMG…AYLV), 65–85 (IPLE…AVIV), 102–122 (LLGI…VALL), 134–154 (VLYG…FAAL), and 171–191 (SIAL…TGLV).

The protein belongs to the NqrDE/RnfAE family. In terms of assembly, the complex is composed of six subunits: RnfA, RnfB, RnfC, RnfD, RnfE and RnfG.

Its subcellular location is the cell inner membrane. Functionally, part of a membrane-bound complex that couples electron transfer with translocation of ions across the membrane. The polypeptide is Ion-translocating oxidoreductase complex subunit A (Actinobacillus pleuropneumoniae serotype 5b (strain L20)).